Consider the following 670-residue polypeptide: DNA ligase (670 aa).

Residues 32 to 36 (DSEYD), 81 to 82 (SL), and Glu114 each bind NAD(+). Catalysis depends on Lys116, which acts as the N6-AMP-lysine intermediate. The NAD(+) site is built by Arg137, Glu174, Lys291, and Lys315. Residues Cys409, Cys412, Cys427, and Cys433 each coordinate Zn(2+). The region spanning 592 to 670 (ASENLFKDKT…EEEFLAQITR (79 aa)) is the BRCT domain.

The protein belongs to the NAD-dependent DNA ligase family. LigA subfamily. The cofactor is Mg(2+). Mn(2+) is required as a cofactor.

The catalysed reaction is NAD(+) + (deoxyribonucleotide)n-3'-hydroxyl + 5'-phospho-(deoxyribonucleotide)m = (deoxyribonucleotide)n+m + AMP + beta-nicotinamide D-nucleotide.. Functionally, DNA ligase that catalyzes the formation of phosphodiester linkages between 5'-phosphoryl and 3'-hydroxyl groups in double-stranded DNA using NAD as a coenzyme and as the energy source for the reaction. It is essential for DNA replication and repair of damaged DNA. This Haemophilus influenzae (strain PittEE) protein is DNA ligase.